A 162-amino-acid polypeptide reads, in one-letter code: Large ribosomal subunit protein uL30 (162 aa).

This sequence belongs to the universal ribosomal protein uL30 family. Part of the 50S ribosomal subunit.

This Staphylothermus marinus (strain ATCC 43588 / DSM 3639 / JCM 9404 / F1) protein is Large ribosomal subunit protein uL30.